Here is a 411-residue protein sequence, read N- to C-terminus: Serine hydroxymethyltransferase (411 aa).

(6S)-5,6,7,8-tetrahydrofolate contacts are provided by residues Leu119 and Gly123–Leu125. At Lys228 the chain carries N6-(pyridoxal phosphate)lysine.

It belongs to the SHMT family. As to quaternary structure, homodimer. Requires pyridoxal 5'-phosphate as cofactor.

It is found in the cytoplasm. The enzyme catalyses (6R)-5,10-methylene-5,6,7,8-tetrahydrofolate + glycine + H2O = (6S)-5,6,7,8-tetrahydrofolate + L-serine. Its pathway is one-carbon metabolism; tetrahydrofolate interconversion. It participates in amino-acid biosynthesis; glycine biosynthesis; glycine from L-serine: step 1/1. Its function is as follows. Catalyzes the reversible interconversion of serine and glycine with tetrahydrofolate (THF) serving as the one-carbon carrier. This reaction serves as the major source of one-carbon groups required for the biosynthesis of purines, thymidylate, methionine, and other important biomolecules. Also exhibits THF-independent aldolase activity toward beta-hydroxyamino acids, producing glycine and aldehydes, via a retro-aldol mechanism. The chain is Serine hydroxymethyltransferase from Clostridium kluyveri (strain NBRC 12016).